The primary structure comprises 156 residues: Ribonuclease pancreatic (156 aa).

Residues 1-28 (MALEKSLVLLPLFVLMLLVLGWVQPSLG) form the signal peptide. Substrate is bound by residues K35 and R38. H40 (proton acceptor) is an active-site residue. N50 and N62 each carry an N-linked (GlcNAc...) asparagine glycan. Intrachain disulfides connect C54–C112, C68–C123, C86–C138, and C93–C100. Residues 69–73 (KPVNT) and K94 each bind substrate. N-linked (GlcNAc...) asparagine glycosylation is present at N104. R113 provides a ligand contact to substrate. An N-linked (GlcNAc...) asparagine glycan is attached at N116. H147 acts as the Proton donor in catalysis.

The protein belongs to the pancreatic ribonuclease family. Monomer. Interacts with and forms tight 1:1 complexes with RNH1. Dimerization of two such complexes may occur. Interaction with RNH1 inhibits this protein.

It localises to the secreted. It catalyses the reaction an [RNA] containing cytidine + H2O = an [RNA]-3'-cytidine-3'-phosphate + a 5'-hydroxy-ribonucleotide-3'-[RNA].. The enzyme catalyses an [RNA] containing uridine + H2O = an [RNA]-3'-uridine-3'-phosphate + a 5'-hydroxy-ribonucleotide-3'-[RNA].. Its function is as follows. Endonuclease that catalyzes the cleavage of RNA on the 3' side of pyrimidine nucleotides. Acts on single-stranded and double-stranded RNA. The chain is Ribonuclease pancreatic (RNASE1) from Nomascus leucogenys (Northern white-cheeked gibbon).